Consider the following 480-residue polypeptide: RNA-splicing ligase RtcB homolog (480 aa).

The Mn(2+) site is built by Asp-93, Cys-96, His-202, His-234, and His-328. 201–205 contributes to the GMP binding site; that stretch reads NHYTE. Residues 328–329, 377–380, Ser-384, 403–406, and Lys-479 each bind GMP; these read HN, GGTM, and HGAG. His-403 acts as the GMP-histidine intermediate in catalysis.

Belongs to the RtcB family. In terms of assembly, catalytic component of the tRNA-splicing ligase complex. Requires Mn(2+) as cofactor.

It catalyses the reaction a 3'-end 3'-phospho-ribonucleotide-RNA + a 5'-end dephospho-ribonucleoside-RNA + GTP = a ribonucleotidyl-ribonucleotide-RNA + GMP + diphosphate. The catalysed reaction is a 3'-end 2',3'-cyclophospho-ribonucleotide-RNA + a 5'-end dephospho-ribonucleoside-RNA + GTP + H2O = a ribonucleotidyl-ribonucleotide-RNA + GMP + diphosphate + H(+). Its function is as follows. Catalytic subunit of the tRNA-splicing ligase complex that acts by directly joining spliced tRNA halves to mature-sized tRNAs by incorporating the precursor-derived splice junction phosphate into the mature tRNA as a canonical 3',5'-phosphodiester. May act as an RNA ligase with broad substrate specificity, and may function toward other RNAs. This chain is RNA-splicing ligase RtcB homolog, found in Thalassiosira pseudonana (Marine diatom).